The following is a 332-amino-acid chain: Biotin synthase (332 aa).

The region spanning Y51–R279 is the Radical SAM core domain. [4Fe-4S] cluster contacts are provided by C66, C70, and C73. Residues C110, C142, C202, and R274 each coordinate [2Fe-2S] cluster.

This sequence belongs to the radical SAM superfamily. Biotin synthase family. In terms of assembly, homodimer. [4Fe-4S] cluster serves as cofactor. It depends on [2Fe-2S] cluster as a cofactor.

The enzyme catalyses (4R,5S)-dethiobiotin + (sulfur carrier)-SH + 2 reduced [2Fe-2S]-[ferredoxin] + 2 S-adenosyl-L-methionine = (sulfur carrier)-H + biotin + 2 5'-deoxyadenosine + 2 L-methionine + 2 oxidized [2Fe-2S]-[ferredoxin]. Its pathway is cofactor biosynthesis; biotin biosynthesis; biotin from 7,8-diaminononanoate: step 2/2. Its function is as follows. Catalyzes the conversion of dethiobiotin (DTB) to biotin by the insertion of a sulfur atom into dethiobiotin via a radical-based mechanism. This chain is Biotin synthase, found in Prochlorococcus marinus (strain SARG / CCMP1375 / SS120).